Here is a 304-residue protein sequence, read N- to C-terminus: UDP-3-O-acyl-N-acetylglucosamine deacetylase (304 aa).

Zn(2+) is bound by residues H79, H238, and D242. H265 (proton donor) is an active-site residue.

This sequence belongs to the LpxC family. It depends on Zn(2+) as a cofactor.

The enzyme catalyses a UDP-3-O-[(3R)-3-hydroxyacyl]-N-acetyl-alpha-D-glucosamine + H2O = a UDP-3-O-[(3R)-3-hydroxyacyl]-alpha-D-glucosamine + acetate. It functions in the pathway glycolipid biosynthesis; lipid IV(A) biosynthesis; lipid IV(A) from (3R)-3-hydroxytetradecanoyl-[acyl-carrier-protein] and UDP-N-acetyl-alpha-D-glucosamine: step 2/6. Functionally, catalyzes the hydrolysis of UDP-3-O-myristoyl-N-acetylglucosamine to form UDP-3-O-myristoylglucosamine and acetate, the committed step in lipid A biosynthesis. This chain is UDP-3-O-acyl-N-acetylglucosamine deacetylase, found in Photobacterium profundum (strain SS9).